Reading from the N-terminus, the 122-residue chain is Large ribosomal subunit protein uL14c (122 aa).

This sequence belongs to the universal ribosomal protein uL14 family. Part of the 50S ribosomal subunit.

The protein resides in the plastid. In terms of biological role, binds to 23S rRNA. This chain is Large ribosomal subunit protein uL14c (rpl14), found in Helicosporidium sp. subsp. Simulium jonesii (Green alga).